A 154-amino-acid chain; its full sequence is Calmodulin-like protein 4 (154 aa).

EF-hand domains lie at 7-42 (EQMV…LGLE), 43-78 (PTDQ…KMKD), 80-115 (DGDE…LGEK), and 116-151 (MTDE…AERK). Residues D20, N22, D24, C26, E31, D56, D58, N60, E67, D93, D95, N97, and E104 each contribute to the Ca(2+) site. K115 bears the N6,N6,N6-trimethyllysine mark. The Ca(2+) site is built by D129, D131, D133, Q135, and E140.

This sequence belongs to the calmodulin family.

Potential calcium sensor. The polypeptide is Calmodulin-like protein 4 (CML4) (Oryza sativa subsp. japonica (Rice)).